A 441-amino-acid polypeptide reads, in one-letter code: Serine carboxypeptidase-like 4 (441 aa).

The N-terminal stretch at 1-29 (MANNNVYSVLKSLLLLLHLVFLSKQHVDS) is a signal peptide. Intrachain disulfides connect cysteine 88–cysteine 331, cysteine 252–cysteine 266, and cysteine 290–cysteine 297. An N-linked (GlcNAc...) asparagine glycan is attached at asparagine 109. Serine 184 is a catalytic residue. Asparagine 350 is a glycosylation site (N-linked (GlcNAc...) asparagine). Aspartate 366 is a catalytic residue. The N-linked (GlcNAc...) asparagine glycan is linked to asparagine 382. The active site involves histidine 419.

This sequence belongs to the peptidase S10 family. In terms of tissue distribution, ubiquitous.

The protein resides in the secreted. Its function is as follows. Probable carboxypeptidase. The polypeptide is Serine carboxypeptidase-like 4 (SCPL4) (Arabidopsis thaliana (Mouse-ear cress)).